Here is a 265-residue protein sequence, read N- to C-terminus: MEMO1 family protein Mbar_A1422 (265 aa).

The protein belongs to the MEMO1 family.

The sequence is that of MEMO1 family protein Mbar_A1422 from Methanosarcina barkeri (strain Fusaro / DSM 804).